The sequence spans 205 residues: Glycerol-3-phosphate acyltransferase (205 aa).

A run of 5 helical transmembrane segments spans residues 13 to 33, 68 to 88, 90 to 110, 120 to 140, and 147 to 167; these read LLAL…GLIL, LLLD…LWGY, ASLV…WLGF, IGVL…IWLA, and YSSL…WVLG.

Belongs to the PlsY family. As to quaternary structure, probably interacts with PlsX.

It is found in the cell inner membrane. The catalysed reaction is an acyl phosphate + sn-glycerol 3-phosphate = a 1-acyl-sn-glycero-3-phosphate + phosphate. It participates in lipid metabolism; phospholipid metabolism. Functionally, catalyzes the transfer of an acyl group from acyl-phosphate (acyl-PO(4)) to glycerol-3-phosphate (G3P) to form lysophosphatidic acid (LPA). This enzyme utilizes acyl-phosphate as fatty acyl donor, but not acyl-CoA or acyl-ACP. This Agrobacterium fabrum (strain C58 / ATCC 33970) (Agrobacterium tumefaciens (strain C58)) protein is Glycerol-3-phosphate acyltransferase.